The chain runs to 143 residues: Myocilin opposite strand protein (143 aa).

A disordered region spans residues 65–111 (MATRDETITKKSGEGEEMLPSMGMDHESPSKAHLMVPPAPPPSPADA). Over residues 66–78 (ATRDETITKKSGE) the composition is skewed to basic and acidic residues.

The chain is Myocilin opposite strand protein from Mus musculus (Mouse).